The chain runs to 265 residues: Putative carbamate hydrolase RutD (265 aa).

The AB hydrolase-1 domain maps to 14-123; that stretch reads PTLVLSSGLG…WSSPNPHSAR (110 aa).

Belongs to the AB hydrolase superfamily. Hydrolase RutD family.

The catalysed reaction is carbamate + 2 H(+) = NH4(+) + CO2. Its function is as follows. Involved in pyrimidine catabolism. May facilitate the hydrolysis of carbamate, a reaction that can also occur spontaneously. The chain is Putative carbamate hydrolase RutD from Stutzerimonas stutzeri (strain A1501) (Pseudomonas stutzeri).